The following is a 379-amino-acid chain: Chaperone protein DnaJ (379 aa).

A J domain is found at 5–71; sequence DYYEILGVSR…EKRAMYDRFG (67 aa). The segment at 149–231 adopts a CR-type zinc-finger fold; sequence GTTIPIEYDR…CGGSGRIRKR (83 aa). Cys162, Cys165, Cys179, Cys182, Cys205, Cys208, Cys219, and Cys222 together coordinate Zn(2+). CXXCXGXG motif repeat units lie at residues 162–169, 179–186, 205–212, and 219–226; these read CSHCNGEG, CPKCHGTG, CNQCGGTG, and CHVCGGSG.

Belongs to the DnaJ family. As to quaternary structure, homodimer. It depends on Zn(2+) as a cofactor.

It is found in the cytoplasm. In terms of biological role, participates actively in the response to hyperosmotic and heat shock by preventing the aggregation of stress-denatured proteins and by disaggregating proteins, also in an autonomous, DnaK-independent fashion. Unfolded proteins bind initially to DnaJ; upon interaction with the DnaJ-bound protein, DnaK hydrolyzes its bound ATP, resulting in the formation of a stable complex. GrpE releases ADP from DnaK; ATP binding to DnaK triggers the release of the substrate protein, thus completing the reaction cycle. Several rounds of ATP-dependent interactions between DnaJ, DnaK and GrpE are required for fully efficient folding. Also involved, together with DnaK and GrpE, in the DNA replication of plasmids through activation of initiation proteins. In Thermosipho africanus (strain TCF52B), this protein is Chaperone protein DnaJ.